A 272-amino-acid polypeptide reads, in one-letter code: Shikimate dehydrogenase (NADP(+)) (272 aa).

Residues 14 to 16 and T61 each bind shikimate; that span reads SKS. K65 (proton acceptor) is an active-site residue. N86 and D102 together coordinate shikimate. NADP(+) contacts are provided by residues 126-130, 149-154, S189, and M213; these read GAGGA and NRTFSK. Y215 contacts shikimate. Residue G238 participates in NADP(+) binding.

Belongs to the shikimate dehydrogenase family. Homodimer.

It carries out the reaction shikimate + NADP(+) = 3-dehydroshikimate + NADPH + H(+). It participates in metabolic intermediate biosynthesis; chorismate biosynthesis; chorismate from D-erythrose 4-phosphate and phosphoenolpyruvate: step 4/7. Involved in the biosynthesis of the chorismate, which leads to the biosynthesis of aromatic amino acids. Catalyzes the reversible NADPH linked reduction of 3-dehydroshikimate (DHSA) to yield shikimate (SA). This is Shikimate dehydrogenase (NADP(+)) from Haemophilus influenzae (strain ATCC 51907 / DSM 11121 / KW20 / Rd).